Reading from the N-terminus, the 395-residue chain is Phosphoglycerate kinase (395 aa).

Residues 22–24 (DLN), Arg-37, 60–63 (HFGR), Arg-116, and Arg-149 contribute to the substrate site. ATP-binding positions include Lys-199, Glu-322, and 352-355 (GGDT).

It belongs to the phosphoglycerate kinase family. As to quaternary structure, monomer.

The protein localises to the cytoplasm. The enzyme catalyses (2R)-3-phosphoglycerate + ATP = (2R)-3-phospho-glyceroyl phosphate + ADP. It functions in the pathway carbohydrate degradation; glycolysis; pyruvate from D-glyceraldehyde 3-phosphate: step 2/5. This chain is Phosphoglycerate kinase, found in Novosphingobium aromaticivorans (strain ATCC 700278 / DSM 12444 / CCUG 56034 / CIP 105152 / NBRC 16084 / F199).